Here is a 619-residue protein sequence, read N- to C-terminus: Probable ATP-dependent RNA helicase DDX59 (619 aa).

Residue lysine 26 forms a Glycyl lysine isopeptide (Lys-Gly) (interchain with G-Cter in SUMO2) linkage. The interval 57-98 is disordered; it reads SESCPFPSPGGQLAEVHSVSPEQGAKDSHPSEEPVKSFSKTQ. A phosphoserine mark is found at serine 64 and serine 76. Positions 80 to 91 are enriched in basic and acidic residues; sequence GAKDSHPSEEPV. An HIT-type zinc finger spans residues 104–133; sequence GEPICVVCGRYGEYICDKTDEDVCSLECKA. Residues 142-161 are disordered; it reads KEEKSKLSNPQKADSEPESP. Phosphoserine is present on residues serine 156 and serine 160. A Q motif motif is present at residues 203 to 231; that stretch reads IDFEHCSLPEVLNHNLKKSGYEVPTPIQM. The Helicase ATP-binding domain maps to 234–405; it reads IPVGLLGRDI…SQLLHNPVRI (172 aa). An ATP-binding site is contributed by 247–254; the sequence is ADTGSGKT. Residues 353-356 carry the DEAD box motif; that stretch reads DEAD. In terms of domain architecture, Helicase C-terminal spans 416-579; that stretch reads NVRQIILWVE…ILPPQLLNSP (164 aa).

It belongs to the DEAD box helicase family. DDX59 subfamily. Interacts (via HIT-type zinc finger) with the RUVBL1/RUVBL2 complex in the presence of ADP. As to expression, expressed in fibroblasts (at protein level).

The protein resides in the cytoplasm. Its subcellular location is the nucleus. The catalysed reaction is ATP + H2O = ADP + phosphate + H(+). This Homo sapiens (Human) protein is Probable ATP-dependent RNA helicase DDX59 (DDX59).